Reading from the N-terminus, the 300-residue chain is Homoserine kinase (300 aa).

82–92 lines the ATP pocket; the sequence is RPGSGLGSSAA.

This sequence belongs to the GHMP kinase family. Homoserine kinase subfamily.

It localises to the cytoplasm. It catalyses the reaction L-homoserine + ATP = O-phospho-L-homoserine + ADP + H(+). The protein operates within amino-acid biosynthesis; L-threonine biosynthesis; L-threonine from L-aspartate: step 4/5. In terms of biological role, catalyzes the ATP-dependent phosphorylation of L-homoserine to L-homoserine phosphate. In Methanocella arvoryzae (strain DSM 22066 / NBRC 105507 / MRE50), this protein is Homoserine kinase.